Here is a 509-residue protein sequence, read N- to C-terminus: ATP synthase subunit alpha (509 aa).

171–178 is a binding site for ATP; sequence GDRKTGKT.

Belongs to the ATPase alpha/beta chains family. F-type ATPases have 2 components, CF(1) - the catalytic core - and CF(0) - the membrane proton channel. CF(1) has five subunits: alpha(3), beta(3), gamma(1), delta(1), epsilon(1). CF(0) has three main subunits: a(1), b(2) and c(9-12). The alpha and beta chains form an alternating ring which encloses part of the gamma chain. CF(1) is attached to CF(0) by a central stalk formed by the gamma and epsilon chains, while a peripheral stalk is formed by the delta and b chains.

It localises to the cell inner membrane. The enzyme catalyses ATP + H2O + 4 H(+)(in) = ADP + phosphate + 5 H(+)(out). In terms of biological role, produces ATP from ADP in the presence of a proton gradient across the membrane. The alpha chain is a regulatory subunit. This is ATP synthase subunit alpha from Ehrlichia canis (strain Jake).